We begin with the raw amino-acid sequence, 452 residues long: Tubulin gamma chain (452 aa).

142–148 (AGGTGSG) contacts GTP.

This sequence belongs to the tubulin family.

It is found in the cytoplasm. The protein resides in the cytoskeleton. Its subcellular location is the microtubule organizing center. The protein localises to the centrosome. Tubulin is the major constituent of microtubules. The gamma chain is found at microtubule organizing centers (MTOC) such as the spindle poles or the centrosome, suggesting that it is involved in the minus-end nucleation of microtubule assembly. This Plasmodium falciparum (isolate NF54) protein is Tubulin gamma chain (G-TUB).